Here is a 244-residue protein sequence, read N- to C-terminus: 15,16-dihydrobiliverdin:ferredoxin oxidoreductase (244 aa).

This sequence belongs to the HY2 family.

It catalyses the reaction 15,16-dihydrobiliverdin + oxidized 2[4Fe-4S]-[ferredoxin] = biliverdin IXalpha + reduced 2[4Fe-4S]-[ferredoxin] + 2 H(+). Functionally, catalyzes the two-electron reduction of biliverdin IX-alpha at the C15 methine bridge. The protein is 15,16-dihydrobiliverdin:ferredoxin oxidoreductase (pebA) of Nostoc punctiforme (strain ATCC 29133 / PCC 73102).